The following is a 331-amino-acid chain: 2-oxoglutarate-dependent dioxygenase (331 aa).

Positions 186–292 (PACPLRLLHY…RYSVVFFMDG (107 aa)) constitute a Fe2OG dioxygenase domain. The Fe cation site is built by histidine 214, aspartate 216, and histidine 272. A 2-oxoglutarate-binding site is contributed by arginine 283.

This sequence belongs to the iron/ascorbate-dependent oxidoreductase family. Fe(2+) serves as cofactor.

Its pathway is mycotoxin biosynthesis. Its function is as follows. 2-oxoglutarate-dependent dioxygenase; part of the gene cluster that mediates the biosynthesis of the selective antifungal agent ascochitine, an o-quinone methide that plays a possible protective role against other microbial competitors in nature and is considered to be important for pathogenicity of legume-associated Didymella species. The pathway probably begins with the synthesis of a keto-aldehyde intermediate by the ascochitine non-reducing polyketide synthase pksAC from successive condensations of 4 malonyl-CoA units, presumably with a simple acetyl-CoA starter unit. Release of the keto-aldehyde intermediate is consistent with the presence of the C-terminal reductive release domain. The HR-PKS (orf7) probably makes a diketide starter unit which is passed to the non-reducing polyketide synthase pksAC for further extension, producing ascochital and ascochitine. The aldehyde dehydrogenase (orf1), the 2-oxoglutarate-dependent dioxygenase (orf3) and the dehydrogenase (orf9) are probably involved in subsequent oxidations of methyl groups to the carboxylic acid of the heterocyclic ring. The ascochitine gene cluster also includes a gene encoding a short peptide with a cupin domain (orf2) that is often found in secondary metabolite gene clusters and which function has still to be determined. This Didymella fabae (Leaf and pod spot disease fungus) protein is 2-oxoglutarate-dependent dioxygenase.